Here is a 403-residue protein sequence, read N- to C-terminus: 4-hydroxy-3-methylbut-2-en-1-yl diphosphate synthase (ferredoxin) (403 aa).

The [4Fe-4S] cluster site is built by C312, C315, C346, and E353.

The protein belongs to the IspG family. It depends on [4Fe-4S] cluster as a cofactor.

The enzyme catalyses (2E)-4-hydroxy-3-methylbut-2-enyl diphosphate + 2 oxidized [2Fe-2S]-[ferredoxin] + H2O = 2-C-methyl-D-erythritol 2,4-cyclic diphosphate + 2 reduced [2Fe-2S]-[ferredoxin] + H(+). Its pathway is isoprenoid biosynthesis; isopentenyl diphosphate biosynthesis via DXP pathway; isopentenyl diphosphate from 1-deoxy-D-xylulose 5-phosphate: step 5/6. Functionally, converts 2C-methyl-D-erythritol 2,4-cyclodiphosphate (ME-2,4cPP) into 1-hydroxy-2-methyl-2-(E)-butenyl 4-diphosphate. In Synechocystis sp. (strain ATCC 27184 / PCC 6803 / Kazusa), this protein is 4-hydroxy-3-methylbut-2-en-1-yl diphosphate synthase (ferredoxin).